The following is a 217-amino-acid chain: Ribonuclease T (217 aa).

Residues 20–194 (VVIDIETAGF…YDTQQTANLF (175 aa)) form the Exonuclease domain. Aspartate 23, glutamate 25, histidine 181, and aspartate 186 together coordinate Mg(2+). Histidine 181 serves as the catalytic Proton donor/acceptor.

It belongs to the RNase T family. In terms of assembly, homodimer. Mg(2+) is required as a cofactor.

Functionally, trims short 3' overhangs of a variety of RNA species, leaving a one or two nucleotide 3' overhang. Responsible for the end-turnover of tRNA: specifically removes the terminal AMP residue from uncharged tRNA (tRNA-C-C-A). Also appears to be involved in tRNA biosynthesis. In Buchnera aphidicola subsp. Baizongia pistaciae (strain Bp), this protein is Ribonuclease T.